The chain runs to 338 residues: Tetraacyldisaccharide 4'-kinase (338 aa).

Thr61 to Thr68 contributes to the ATP binding site.

Belongs to the LpxK family.

The enzyme catalyses a lipid A disaccharide + ATP = a lipid IVA + ADP + H(+). It participates in glycolipid biosynthesis; lipid IV(A) biosynthesis; lipid IV(A) from (3R)-3-hydroxytetradecanoyl-[acyl-carrier-protein] and UDP-N-acetyl-alpha-D-glucosamine: step 6/6. Its function is as follows. Transfers the gamma-phosphate of ATP to the 4'-position of a tetraacyldisaccharide 1-phosphate intermediate (termed DS-1-P) to form tetraacyldisaccharide 1,4'-bis-phosphate (lipid IVA). The sequence is that of Tetraacyldisaccharide 4'-kinase from Nitrosococcus oceani (strain ATCC 19707 / BCRC 17464 / JCM 30415 / NCIMB 11848 / C-107).